The chain runs to 499 residues: Glycerol kinase (499 aa).

Thr13 is a binding site for ADP. Thr13, Thr14, and Ser15 together coordinate ATP. A sn-glycerol 3-phosphate-binding site is contributed by Thr13. Arg17 contributes to the ADP binding site. Residues Arg83, Glu84, Tyr135, and Asp245 each contribute to the sn-glycerol 3-phosphate site. Residues Arg83, Glu84, Tyr135, Asp245, and Gln246 each coordinate glycerol. Thr267 and Gly310 together coordinate ADP. 4 residues coordinate ATP: Thr267, Gly310, Gln314, and Gly411. 2 residues coordinate ADP: Gly411 and Asn415.

It belongs to the FGGY kinase family.

It carries out the reaction glycerol + ATP = sn-glycerol 3-phosphate + ADP + H(+). It functions in the pathway polyol metabolism; glycerol degradation via glycerol kinase pathway; sn-glycerol 3-phosphate from glycerol: step 1/1. Inhibited by fructose 1,6-bisphosphate (FBP). Key enzyme in the regulation of glycerol uptake and metabolism. Catalyzes the phosphorylation of glycerol to yield sn-glycerol 3-phosphate. The polypeptide is Glycerol kinase (Stenotrophomonas maltophilia (strain R551-3)).